We begin with the raw amino-acid sequence, 547 residues long: Chaperonin GroEL 1 (547 aa).

Residues 30–33 (TLGP), Lys51, 87–91 (DGTTT), Gly415, and Asp496 contribute to the ATP site.

The protein belongs to the chaperonin (HSP60) family. As to quaternary structure, forms a cylinder of 14 subunits composed of two heptameric rings stacked back-to-back. Interacts with the co-chaperonin GroES.

Its subcellular location is the cytoplasm. It carries out the reaction ATP + H2O + a folded polypeptide = ADP + phosphate + an unfolded polypeptide.. Functionally, together with its co-chaperonin GroES, plays an essential role in assisting protein folding. The GroEL-GroES system forms a nano-cage that allows encapsulation of the non-native substrate proteins and provides a physical environment optimized to promote and accelerate protein folding. This is Chaperonin GroEL 1 from Rhodopseudomonas palustris (strain ATCC BAA-98 / CGA009).